Consider the following 1462-residue polypeptide: Protein peg1 (1462 aa).

Disordered stretches follow at residues 528–563 (SFSKSQKEETSSNSSNSSGTRRLGLPQRATPASRER) and 573–592 (FHSTSLPPSLPSGHSPSIAI). Low complexity-rich tracts occupy residues 538-552 (SSNSSNSSGTRRLGL) and 574-589 (HSTSLPPSLPSGHSPS). A Phosphoserine modification is found at serine 599. Residues 838-928 (SSTHQEHLSK…NCSEESLDDH (91 aa)) form a disordered region. Residues 847–866 (KNLPTLNTSSSSNSSQTDLL) are compositionally biased toward low complexity. The span at 870-896 (GKGETKETEMQSPIESKEGLLSKDTHI) shows a compositional bias: basic and acidic residues. The residue at position 1221 (serine 1221) is a Phosphoserine. Residues 1342 to 1367 (TLIAEIADLQGLYEFTQQRLQSLNTE) are a coiled coil.

The protein belongs to the CLASP family. In terms of assembly, interacts with microtubules. Interacts with dhc1, mal3 and tea1.

The protein localises to the cytoplasm. It is found in the cytoskeleton. Its subcellular location is the spindle. It localises to the microtubule organizing center. The protein resides in the spindle pole body. Its function is as follows. Microtubule binding protein that regulates the stability of dynamic microtubules. Required for mitotic spindle formation. This is Protein peg1 (peg1) from Schizosaccharomyces pombe (strain 972 / ATCC 24843) (Fission yeast).